A 166-amino-acid polypeptide reads, in one-letter code: Probable chemoreceptor glutamine deamidase CheD (166 aa).

It belongs to the CheD family.

The enzyme catalyses L-glutaminyl-[protein] + H2O = L-glutamyl-[protein] + NH4(+). Its function is as follows. Probably deamidates glutamine residues to glutamate on methyl-accepting chemotaxis receptors (MCPs), playing an important role in chemotaxis. This chain is Probable chemoreceptor glutamine deamidase CheD, found in Oceanobacillus iheyensis (strain DSM 14371 / CIP 107618 / JCM 11309 / KCTC 3954 / HTE831).